The following is a 180-amino-acid chain: tRNA (cytidine(56)-2'-O)-methyltransferase (180 aa).

S-adenosyl-L-methionine contacts are provided by residues Leu83, Gly115–Val119, and Val133–Glu140.

This sequence belongs to the aTrm56 family. In terms of assembly, homodimer.

It is found in the cytoplasm. It carries out the reaction cytidine(56) in tRNA + S-adenosyl-L-methionine = 2'-O-methylcytidine(56) in tRNA + S-adenosyl-L-homocysteine + H(+). In terms of biological role, specifically catalyzes the AdoMet-dependent 2'-O-ribose methylation of cytidine at position 56 in tRNAs. In Methanococcus aeolicus (strain ATCC BAA-1280 / DSM 17508 / OCM 812 / Nankai-3), this protein is tRNA (cytidine(56)-2'-O)-methyltransferase.